The chain runs to 335 residues: Acetyl-coenzyme A carboxylase carboxyl transferase subunit alpha (335 aa).

One can recognise a CoA carboxyltransferase C-terminal domain in the interval 38-292; sequence TLEQKAEELR…ATALSEEIEN (255 aa).

Belongs to the AccA family. In terms of assembly, acetyl-CoA carboxylase is a heterohexamer composed of biotin carboxyl carrier protein (AccB), biotin carboxylase (AccC) and two subunits each of ACCase subunit alpha (AccA) and ACCase subunit beta (AccD).

Its subcellular location is the cytoplasm. It carries out the reaction N(6)-carboxybiotinyl-L-lysyl-[protein] + acetyl-CoA = N(6)-biotinyl-L-lysyl-[protein] + malonyl-CoA. It functions in the pathway lipid metabolism; malonyl-CoA biosynthesis; malonyl-CoA from acetyl-CoA: step 1/1. Component of the acetyl coenzyme A carboxylase (ACC) complex. First, biotin carboxylase catalyzes the carboxylation of biotin on its carrier protein (BCCP) and then the CO(2) group is transferred by the carboxyltransferase to acetyl-CoA to form malonyl-CoA. This is Acetyl-coenzyme A carboxylase carboxyl transferase subunit alpha from Heliobacterium modesticaldum (strain ATCC 51547 / Ice1).